Here is a 226-residue protein sequence, read N- to C-terminus: ATP-dependent dethiobiotin synthetase BioD (226 aa).

13 to 18 (DVGKTL) is an ATP binding site. Residue Thr-17 coordinates Mg(2+). The active site involves Lys-38. Residues Asp-55, 117 to 120 (EGAG), 177 to 178 (NR), 206 to 208 (PFV), and Glu-213 each bind ATP. Residues Asp-55 and Glu-117 each contribute to the Mg(2+) site.

Belongs to the dethiobiotin synthetase family. Homodimer. Mg(2+) is required as a cofactor.

It localises to the cytoplasm. The enzyme catalyses (7R,8S)-7,8-diammoniononanoate + CO2 + ATP = (4R,5S)-dethiobiotin + ADP + phosphate + 3 H(+). It participates in cofactor biosynthesis; biotin biosynthesis; biotin from 7,8-diaminononanoate: step 1/2. Catalyzes a mechanistically unusual reaction, the ATP-dependent insertion of CO2 between the N7 and N8 nitrogen atoms of 7,8-diaminopelargonic acid (DAPA, also called 7,8-diammoniononanoate) to form a ureido ring. The sequence is that of ATP-dependent dethiobiotin synthetase BioD from Aeromonas salmonicida (strain A449).